A 27-amino-acid chain; its full sequence is GCIATGSFCTLSKGCCTKNCGWNFACN.

3 disulfides stabilise this stretch: Cys2–Cys16, Cys9–Cys20, and Cys15–Cys26.

It belongs to the nemertide family. As to expression, confined to the epidermis and to the mucus layer.

It localises to the secreted. Highly potent toxin against both insect and some mammalian sodium channels (Nav). It potently inhibits inactivation of insect sodium channels of B.germanica (BgNav1) and also delays the inactivation of mammalian Nav with potent activity on Nav1.3/SCN3A and Nav1.4/SCN4A. 1 uM is enough to completely inhibits the inactivation, resulting in sustained non-inactivating currents. In addition, the toxin significantly enhances the recovery from inactivation, and the open state is not required for the toxin to interact with the channel. In vivo, injection into brine shrimp (Artemia salina) stops movement or causes death after 24 hours (EC(50)=0.4 uM). This chain is Nemertide alpha-8, found in Riseriellus occultus (Ribbon worm).